The following is a 242-amino-acid chain: Endothelial protein C receptor (242 aa).

Positions 1–17 (MLTKFLPLLLLLLPGCA) are cleaved as a signal peptide. At 18 to 214 (LCNSDGSQSL…GSQTGRSYTS (197 aa)) the chain is on the extracellular side. N-linked (GlcNAc...) asparagine glycosylation is found at Asn46, Asn63, Asn140, Asn166, and Asn176. 2 cysteine pairs are disulfide-bonded: Cys119–Cys190 and Cys223–Cys236. The chain crosses the membrane as a helical span at residues 215–235 (LVLGILMGCFIIAGVAVGIFM). Residues 236–242 (CTSGRRC) lie on the Cytoplasmic side of the membrane.

As to expression, expressed in endothelial cells.

It localises to the membrane. Its function is as follows. Binds activated protein C. Enhances protein C activation by the thrombin-thrombomodulin complex; plays a role in the protein C pathway controlling blood coagulation. The protein is Endothelial protein C receptor (Procr) of Mus musculus (Mouse).